The primary structure comprises 684 residues: Multisite-specific tRNA:(cytosine-C(5))-methyltransferase (684 aa).

Over residues 1 to 12 (MARRKNFKKGNK) the composition is skewed to basic residues. Residues 1-24 (MARRKNFKKGNKKTFGARDDSRAQ) are disordered. S-adenosyl-L-methionine is bound by residues 173–179 (CAAPGSK), aspartate 202, aspartate 229, and aspartate 257. Cysteine 310 (nucleophile) is an active-site residue. At threonine 426 the chain carries Phosphothreonine. Serine 431 is subject to Phosphoserine. Positions 650–684 (KATPSAEEKEKEKETTESPAETTTGTSTEAPSAAN) are disordered. Residues 655-665 (AEEKEKEKETT) show a composition bias toward basic and acidic residues. The segment covering 666–684 (ESPAETTTGTSTEAPSAAN) has biased composition (low complexity). Serine 667 bears the Phosphoserine mark.

This sequence belongs to the class I-like SAM-binding methyltransferase superfamily. RsmB/NOP family. TRM4 subfamily.

Its subcellular location is the nucleus. It localises to the nucleolus. The enzyme catalyses cytidine(34) in tRNA precursor + S-adenosyl-L-methionine = 5-methylcytidine(34) in tRNA precursor + S-adenosyl-L-homocysteine + H(+). It carries out the reaction cytidine(40) in tRNA precursor + S-adenosyl-L-methionine = 5-methylcytidine(40) in tRNA precursor + S-adenosyl-L-homocysteine + H(+). The catalysed reaction is cytidine(48) in tRNA + S-adenosyl-L-methionine = 5-methylcytidine(48) in tRNA + S-adenosyl-L-homocysteine + H(+). It catalyses the reaction cytidine(49) in tRNA + S-adenosyl-L-methionine = 5-methylcytidine(49) in tRNA + S-adenosyl-L-homocysteine + H(+). Its function is as follows. Methylates cytosine to m5C at several positions in different tRNAs and pre-tRNAs containing intron. Able to modify tRNAs at all four positions (34, 40, 48 and 49) at which m5C has been found in tRNAs. May be involved in ribosome biogenesis as its disruption leads to increased sensitivity to the antibiotic paromomycin. This chain is Multisite-specific tRNA:(cytosine-C(5))-methyltransferase (NCL1), found in Saccharomyces cerevisiae (strain ATCC 204508 / S288c) (Baker's yeast).